The primary structure comprises 297 residues: MEDYTKIEKIGEGTYGVVYKGRHKTTGQVVTMKKIRLESEEEGVPSTAIREISLLKELRHPNIVSLQDVLMQDSRLYLIFEFLSMDLKKYLDSIPPGQYMDSSLVKSYLYQILQGIVFCHSRRVLHRDLKPQNLLIDDKGTIKLADFGLARAFGIPIRVYTHEVVTLWYRSPEVLLGSARYSTPVDIWSIGTIFAELATKKPLFHGDSEIDQLFRIFRALGTPNNEVWPEVESLQDYKNTFPKWKPGSLASHVKNLDENGLDLLSKMLIYDPAKRISGKMALNHPYFNDLDNQIKKM.

Met1 is subject to N-acetylmethionine. Position 4 is a phosphotyrosine; by PKR (Tyr4). Residues 4 to 287 (YTKIEKIGEG…GKMALNHPYF (284 aa)) form the Protein kinase domain. An N6-acetyllysine; alternate mark is found at Lys6 and Lys9. Glycyl lysine isopeptide (Lys-Gly) (interchain with G-Cter in SUMO2); alternate cross-links involve residues Lys6 and Lys9. Position 10-18 (10-18 (IGEGTYGVV)) interacts with ATP. The residue at position 14 (Thr14) is a Phosphothreonine; by PKMYT1. A Phosphotyrosine; by PKMYT1, WEE1 and WEE2 modification is found at Tyr15. A Phosphotyrosine; by WEE1 and WEE2 modification is found at Tyr15. A Phosphotyrosine modification is found at Tyr19. Lys20 is covalently cross-linked (Glycyl lysine isopeptide (Lys-Gly) (interchain with G-Cter in SUMO2)). Lys33 serves as a coordination point for ATP. At Ser39 the chain carries Phosphoserine. Tyr77 is modified (phosphotyrosine). The active-site Proton acceptor is Asp128. Lys139 participates in a covalent cross-link: Glycyl lysine isopeptide (Lys-Gly) (interchain with G-Cter in SUMO2). At Thr141 the chain carries Phosphothreonine. Thr161 is subject to Phosphothreonine; by CAK. At Ser178 the chain carries Phosphoserine. Thr222 carries the phosphothreonine modification. N6-succinyllysine is present on Lys245. Ser248 is modified (phosphoserine).

This sequence belongs to the protein kinase superfamily. CMGC Ser/Thr protein kinase family. CDC2/CDKX subfamily. Forms a stable but non-covalent complex with a regulatory subunit and with a cyclin. Interacts with cyclins-B (CCNB1, CCNB2 and CCNB3) to form a serine/threonine kinase holoenzyme complex also known as maturation promoting factor (MPF). The cyclin subunit imparts substrate specificity to the complex. Can also form CDK1-cylin-D and CDK1-cyclin-E complexes that phosphorylate RB1 in vitro. Binds to RB1 and other transcription factors such as FOXO1 and RUNX2. Promotes G2-M transition when in complex with a cyclin-B. Interacts with DLGAP5. Binds to the CDK inhibitors CDKN1A/p21 and CDKN1B/p27. Isoform 2 is unable to complex with cyclin-B1 and also fails to bind to CDKN1A/p21. Interacts with catalytically active CCNB1 and RALBP1 during mitosis to form an endocytotic complex during interphase. Associates with cyclins-A and B1 during S-phase in regenerating hepatocytes. Interacts with FANCC. Interacts with CEP63; this interaction recruits CDK1 to centrosomes. Interacts with CENPA. Interacts with NR1D1. Interacts with proteasome subunit PSMA8; to participate in meiosis progression during spermatogenesis. In terms of processing, phosphorylation at Thr-161 by CAK/CDK7 activates kinase activity. Phosphorylation at Thr-14 and Tyr-15 by PKMYT1 prevents nuclear translocation. Phosphorylation at Tyr-15 by WEE1 and WEE2 inhibits the protein kinase activity and acts as a negative regulator of entry into mitosis (G2 to M transition). Phosphorylation by PKMYT1 and WEE1 takes place during mitosis to keep CDK1-cyclin-B complexes inactive until the end of G2. By the end of G2, PKMYT1 and WEE1 are inactivated, but CDC25A and CDC25B are activated. Dephosphorylation by active CDC25A and CDC25B at Thr-14 and Tyr-15, leads to CDK1 activation at the G2-M transition. Phosphorylation at Tyr-15 by WEE2 during oogenesis is required to maintain meiotic arrest in oocytes during the germinal vesicle (GV) stage, a long period of quiescence at dictyate prophase I, leading to prevent meiotic reentry. Phosphorylation by WEE2 is also required for metaphase II exit during egg activation to ensure exit from meiosis in oocytes and promote pronuclear formation. Phosphorylated at Tyr-4 by PKR/EIF2AK2 upon genotoxic stress. This phosphorylation triggers CDK1 polyubiquitination and subsequent proteolysis, thus leading to G2 arrest. Post-translationally, polyubiquitinated upon genotoxic stress.

The protein resides in the nucleus. It localises to the cytoplasm. Its subcellular location is the mitochondrion. The protein localises to the cytoskeleton. It is found in the microtubule organizing center. The protein resides in the centrosome. It localises to the spindle. The catalysed reaction is L-seryl-[protein] + ATP = O-phospho-L-seryl-[protein] + ADP + H(+). The enzyme catalyses L-threonyl-[protein] + ATP = O-phospho-L-threonyl-[protein] + ADP + H(+). It carries out the reaction [DNA-directed RNA polymerase] + ATP = phospho-[DNA-directed RNA polymerase] + ADP + H(+). Phosphorylation at Thr-14 or Tyr-15 inactivates the enzyme, while phosphorylation at Thr-161 activates it. Activated through a multistep process; binding to cyclin-B is required for relocation of cyclin-kinase complexes to the nucleus, activated by CAK/CDK7-mediated phosphorylation on Thr-161, and CDC25-mediated dephosphorylation of inhibitory phosphorylation on Thr-14 and Tyr-15. Activity is restricted during S-phase in an ATR-dependent manner to prevent premature entry into G2. Repressed by the CDK inhibitors CDKN1A/p21 and CDKN1B/p27 during the G1 phase and by CDKN1A/p21 at the G1-S checkpoint upon DNA damage. Transient activation by rapid and transient dephosphorylation at Tyr-15 triggered by TGFB1. In terms of biological role, plays a key role in the control of the eukaryotic cell cycle by modulating the centrosome cycle as well as mitotic onset; promotes G2-M transition via association with multiple interphase cyclins. Phosphorylates PARVA/actopaxin, APC, AMPH, APC, BARD1, Bcl-xL/BCL2L1, BRCA2, CALD1, CASP8, CDC7, CDC20, CDC25A, CDC25C, CC2D1A, CENPA, CSNK2 proteins/CKII, FZR1/CDH1, CDK7, CEBPB, CHAMP1, DMD/dystrophin, EEF1 proteins/EF-1, EZH2, KIF11/EG5, EGFR, FANCG, FOS, GFAP, GOLGA2/GM130, GRASP1, UBE2A/hHR6A, HIST1H1 proteins/histone H1, HMGA1, HIVEP3/KRC, KAT5, LMNA, LMNB, LBR, LATS1, MAP1B, MAP4, MARCKS, MCM2, MCM4, MKLP1, MLST8, MYB, NEFH, NFIC, NPC/nuclear pore complex, PITPNM1/NIR2, NPM1, NCL, NUCKS1, NPM1/numatrin, ORC1, PRKAR2A, EEF1E1/p18, EIF3F/p47, p53/TP53, NONO/p54NRB, PAPOLA, PLEC/plectin, RB1, TPPP, UL40/R2, RAB4A, RAP1GAP, RBBP8/CtIP, RCC1, RPS6KB1/S6K1, KHDRBS1/SAM68, ESPL1, SKI, BIRC5/survivin, STIP1, TEX14, beta-tubulins, MAPT/TAU, NEDD1, VIM/vimentin, TK1, FOXO1, RUNX1/AML1, SAMHD1, SIRT2, CGAS and RUNX2. CDK1/CDC2-cyclin-B controls pronuclear union in interphase fertilized eggs. Essential for early stages of embryonic development. During G2 and early mitosis, CDC25A/B/C-mediated dephosphorylation activates CDK1/cyclin complexes which phosphorylate several substrates that trigger at least centrosome separation, Golgi dynamics, nuclear envelope breakdown and chromosome condensation. Once chromosomes are condensed and aligned at the metaphase plate, CDK1 activity is switched off by WEE1- and PKMYT1-mediated phosphorylation to allow sister chromatid separation, chromosome decondensation, reformation of the nuclear envelope and cytokinesis. Phosphorylates KRT5 during prometaphase and metaphase. Inactivated by PKR/EIF2AK2- and WEE1-mediated phosphorylation upon DNA damage to stop cell cycle and genome replication at the G2 checkpoint thus facilitating DNA repair. Reactivated after successful DNA repair through WIP1-dependent signaling leading to CDC25A/B/C-mediated dephosphorylation and restoring cell cycle progression. Catalyzes lamin (LMNA, LMNB1 and LMNB2) phosphorylation at the onset of mitosis, promoting nuclear envelope breakdown. In proliferating cells, CDK1-mediated FOXO1 phosphorylation at the G2-M phase represses FOXO1 interaction with 14-3-3 proteins and thereby promotes FOXO1 nuclear accumulation and transcription factor activity, leading to cell death of postmitotic neurons. The phosphorylation of beta-tubulins regulates microtubule dynamics during mitosis. NEDD1 phosphorylation promotes PLK1-mediated NEDD1 phosphorylation and subsequent targeting of the gamma-tubulin ring complex (gTuRC) to the centrosome, an important step for spindle formation. In addition, CC2D1A phosphorylation regulates CC2D1A spindle pole localization and association with SCC1/RAD21 and centriole cohesion during mitosis. The phosphorylation of Bcl-xL/BCL2L1 after prolongated G2 arrest upon DNA damage triggers apoptosis. In contrast, CASP8 phosphorylation during mitosis prevents its activation by proteolysis and subsequent apoptosis. This phosphorylation occurs in cancer cell lines, as well as in primary breast tissues and lymphocytes. EZH2 phosphorylation promotes H3K27me3 maintenance and epigenetic gene silencing. CALD1 phosphorylation promotes Schwann cell migration during peripheral nerve regeneration. CDK1-cyclin-B complex phosphorylates NCKAP5L and mediates its dissociation from centrosomes during mitosis. Regulates the amplitude of the cyclic expression of the core clock gene BMAL1 by phosphorylating its transcriptional repressor NR1D1, and this phosphorylation is necessary for SCF(FBXW7)-mediated ubiquitination and proteasomal degradation of NR1D1. Phosphorylates EML3 at 'Thr-881' which is essential for its interaction with HAUS augmin-like complex and TUBG1. Phosphorylates CGAS during mitosis, leading to its inhibition, thereby preventing CGAS activation by self DNA during mitosis. Phosphorylates SKA3 during mitosis which promotes SKA3 binding to the NDC80 complex and anchoring of the SKA complex to kinetochores, to enable stable attachment of mitotic spindle microtubules to kinetochores. This chain is Cyclin-dependent kinase 1 (CDK1), found in Pongo abelii (Sumatran orangutan).